The primary structure comprises 204 residues: Mediator of RNA polymerase II transcription subunit 31 (204 aa).

The interval Gln134–Asn204 is disordered. The span at Ser161 to Ala194 shows a compositional bias: low complexity.

It belongs to the Mediator complex subunit 31 family. In terms of assembly, component of the Mediator complex, which includes at least MED4, MED6, MED14, MED17, MED18, MED20, MED21, MED23, MED24, MED27, MED30 and MED31.

The protein localises to the nucleus. Functionally, component of the Mediator complex, a coactivator involved in the regulated transcription of nearly all RNA polymerase II-dependent genes. Mediator functions as a bridge to convey information from gene-specific regulatory proteins to the basal RNA polymerase II transcription machinery. Mediator is recruited to promoters by direct interactions with regulatory proteins and serves as a scaffold for the assembly of a functional preinitiation complex with RNA polymerase II and the general transcription factors. Required for activated transcription of the MtnA gene. This is Mediator of RNA polymerase II transcription subunit 31 (MED31) from Drosophila melanogaster (Fruit fly).